The chain runs to 105 residues: Large ribosomal subunit protein bL21 (105 aa).

This sequence belongs to the bacterial ribosomal protein bL21 family. In terms of assembly, part of the 50S ribosomal subunit. Contacts protein L20.

In terms of biological role, this protein binds to 23S rRNA in the presence of protein L20. This Desulfatibacillum aliphaticivorans protein is Large ribosomal subunit protein bL21.